A 344-amino-acid polypeptide reads, in one-letter code: MSNMMKALVKAKAEPGIWMEEVPVPEIGPNDVLIKIRKTAICGTDVHIYNWDQWAQKTVPVPMVTGHEFVGTVADFGAAVTEYKVGQRVSGEGHIVCGHCRNCRAGRGHLCRNTLGVGVNRPGAFGEYLAIPQHNVVPIPDDVPDEIAAIFDPLGNAVHTALSFDLVGEDVLVTGAGPIGIMGALVAQCVGARKVVITDINPVRLALAKKLGVQHVVDASKEKLRDVMPVLGMTEGFDVGLEMSGAAPAFRDMIDTMNNGGKIAILGIAPTGFEIDWNKVIFKMLHLKGIYGREMFETWYKMIALVQGPLDVSGLITHRIGIDDFQEGFDAMRSGSSGKVVMDW.

Zn(2+) is bound at residue cysteine 42. Residues threonine 44 and histidine 47 each act as charge relay system in the active site. Histidine 67, glutamate 68, cysteine 97, cysteine 100, cysteine 103, and cysteine 111 together coordinate Zn(2+). Residues isoleucine 179, aspartate 199, arginine 204, 266–268 (LGI), and 290–291 (IY) each bind NAD(+).

The protein belongs to the zinc-containing alcohol dehydrogenase family. Homotetramer. The cofactor is Zn(2+).

It localises to the cytoplasm. It catalyses the reaction L-threonine + NAD(+) = (2S)-2-amino-3-oxobutanoate + NADH + H(+). It participates in amino-acid degradation; L-threonine degradation via oxydo-reductase pathway; glycine from L-threonine: step 1/2. Functionally, catalyzes the NAD(+)-dependent oxidation of L-threonine to 2-amino-3-ketobutyrate. The protein is L-threonine 3-dehydrogenase of Mesorhizobium japonicum (strain LMG 29417 / CECT 9101 / MAFF 303099) (Mesorhizobium loti (strain MAFF 303099)).